The chain runs to 443 residues: Diels-Alderase poxQ (443 aa).

Positions 1-23 are cleaved as a signal peptide; sequence MARIPLEFLSITLPVLLLAYCLA. Asn-78, Asn-97, and Asn-145 each carry an N-linked (GlcNAc...) asparagine glycan.

Belongs to the Diels-Alderase family.

It participates in secondary metabolite biosynthesis. Diels-Alderase; part of the gene cluster that mediates the biosynthesis of oxaleimides, cytotoxic compounds containing an unusual disubstituted succinimide moiety. The first step of the pathway is provided by the HR-PKS poxF that serves in a new mode of collaborative biosynthesis with the PKS-NRPS poxE, by providing the olefin containing amino acid substrate via the synthesis of an ACP-bound dec-4-enoate. The cytochrome P450 monooxygenase poxM-catalyzed oxidation at the alpha-position creates the enzyme-bound 2-hydroxydec-4-enoyl-ACP thioester, which may be prone to spontaneous hydrolysis to yield 2-hydroxydec-4-enoic acid due to increased electrophilicity of the carbonyl. 2-hydroxydec-4-enoic acid can then be further oxidized by poxM to yield the alpha-ketoacid 2-oxodec-4-enoicacid, which is reductively aminated by the aminotransferase poxL to yield (S,E)-2-aminodec-4-enoic acid. The Hybrid PKS-NRPS synthetase poxE then performs condensation between the octaketide product of its PKS modules and the amino group of (S,E)-2-aminodec-4-enoic acid which is activated and incorporated by the adenylation domain. The resulting aminoacyl product can be cyclized by the Diels-Alderase PoxQ and reductively released by the reductive (R) domain of poxE to yield an aldehyde intermediate. The released aldehyde is then substrate for a Knoevenagel condensation by the hydrolyase poxO followed by an oxidation at the 5-position of the pyrrolidone ring. The presence of the olefin from the amino acid building block allows for migration of the substituted allyl group to occur. This allylic transposition reaction takes place in a conjugate addition, semipinacol-like fashion to yield a succinimide intermediate. Iterative two-electron oxidations of the C7 methyl of the succinimide intermediate to the carboxylic acid can be catalyzed by one of two remaining cytochrome P450 monooxygenasess poxC or poxD to yield oxaleimide A. Subsequent oxidation yields the maleimide scaffold oxaleimide I. Both oxaleimide A and oxaleimide I can undergo oxidative modifications in the decalin ring to yield the series of products oxaleimides B to H. This is Diels-Alderase poxQ from Penicillium oxalicum (strain 114-2 / CGMCC 5302) (Penicillium decumbens).